A 270-amino-acid polypeptide reads, in one-letter code: L-fucose dehydrogenase (270 aa).

Residues Arg19, Ile21, Asp40, Lys41, Asp62, Val63, Asn89, Tyr154, Lys158, Ile187, Thr189, and Leu191 each coordinate NAD(+). Residue Tyr154 is the Proton acceptor of the active site.

The protein belongs to the short-chain dehydrogenases/reductases (SDR) family. In terms of assembly, homotetramer. As to expression, detected in retina.

Its subcellular location is the cytoplasm. The catalysed reaction is L-fucose + NAD(+) = L-fucono-1,5-lactone + NADH + H(+). It carries out the reaction D-arabinose + NAD(+) = D-arabinono-1,5-lactone + NADH + H(+). It catalyses the reaction L-galactose + NAD(+) = L-galactono-1,5-lactone + NADH + H(+). It participates in carbohydrate degradation; L-fucose degradation. In terms of biological role, catalyzes the NAD(+)-dependent oxidation of L-fucose, yielding L-fucono-1,5-lactone, which rapidly converts spontaneously to L-fucone-1,4-lactone. Can also act on D-arabinose and L-galactose, with lower catalytic efficiency. Does not use NADPH. May be the initial enzyme of the putative L-fucose degradation pathway in mammals. The sequence is that of L-fucose dehydrogenase (HSD17B14) from Bos taurus (Bovine).